The chain runs to 269 residues: Putative phosphoenolpyruvate synthase regulatory protein (269 aa).

ADP is bound at residue 149 to 156 (GVSRSGKT).

This sequence belongs to the pyruvate, phosphate/water dikinase regulatory protein family. PSRP subfamily.

It catalyses the reaction [pyruvate, water dikinase] + ADP = [pyruvate, water dikinase]-phosphate + AMP + H(+). The catalysed reaction is [pyruvate, water dikinase]-phosphate + phosphate + H(+) = [pyruvate, water dikinase] + diphosphate. Bifunctional serine/threonine kinase and phosphorylase involved in the regulation of the phosphoenolpyruvate synthase (PEPS) by catalyzing its phosphorylation/dephosphorylation. This chain is Putative phosphoenolpyruvate synthase regulatory protein, found in Colwellia psychrerythraea (strain 34H / ATCC BAA-681) (Vibrio psychroerythus).